Reading from the N-terminus, the 507-residue chain is FAD-linked oxidoreductase OXR1 (507 aa).

An N-terminal signal peptide occupies residues 1–21 (MTIKFASLILAGLGLGSGALG). N-linked (GlcNAc...) asparagine glycans are attached at residues Asn34 and Asn65. In terms of domain architecture, FAD-binding PCMH-type spans 73–245 (YAPPTFKVSV…VSATYKLKPL (173 aa)). 2 N-linked (GlcNAc...) asparagine glycosylation sites follow: Asn263 and Asn288.

The protein belongs to the oxygen-dependent FAD-linked oxidoreductase family. FAD is required as a cofactor.

The catalysed reaction is dihydropyriculol + A = pyriculol + AH2. It carries out the reaction dihydropyriculariol + A = pyriculariol + AH2. It participates in polyketide biosynthesis. Functionally, FAD-linked oxidoreductase; part of the gene cluster that mediates the biosynthesis of pyriculol and pyriculariol, two heptaketides that induce lesion formation upon application on rice leaves but are dispensable for pathogenicity. The highly reducing polyketide synthase synthesizes the heptaketide backbone of pyriculol and pyriculariol. Pyriculol and pyriculariol contain several hydroxyl moieties and double bonds, so it can be assumed that several reduction steps occur during biosynthesis. These reactions could be executed by PKS19 itself or partly by the tailoring enzymes OXR1, OXR2, RED1, RED2 or RED3, identified within the cluster. The FAD-linked oxidoreductase OXR1 is the only tailoring enzyme for which the function has been determined yet, and is involved in the oxidation of dihydropyriculol and dihydropyriculariol into pyriculol and pyriculariol, respectively. The chain is FAD-linked oxidoreductase OXR1 from Pyricularia oryzae (strain 70-15 / ATCC MYA-4617 / FGSC 8958) (Rice blast fungus).